Reading from the N-terminus, the 59-residue chain is Large ribosomal subunit protein bL32 (59 aa).

Positions 1–20 (MAVPRNRHSNARKNIRRSHH) are disordered.

This sequence belongs to the bacterial ribosomal protein bL32 family.

This is Large ribosomal subunit protein bL32 from Chlamydia trachomatis serovar A (strain ATCC VR-571B / DSM 19440 / HAR-13).